Consider the following 378-residue polypeptide: Small ribosomal subunit protein bS1 (378 aa).

5 S1 motif domains span residues 1-66 (ETVT…VSRR), 87-155 (GMEV…LGLK), 172-242 (GTKL…LGLK), 259-329 (GDRV…LGVK), and 346-378 (GAIV…ASEA).

This sequence belongs to the bacterial ribosomal protein bS1 family.

Functionally, binds mRNA; thus facilitating recognition of the initiation point. It is needed to translate mRNA with a short Shine-Dalgarno (SD) purine-rich sequence. The protein is Small ribosomal subunit protein bS1 (rpsA) of Providencia sp.